A 170-amino-acid polypeptide reads, in one-letter code: Large ribosomal subunit protein uL10 (170 aa).

This sequence belongs to the universal ribosomal protein uL10 family. Part of the ribosomal stalk of the 50S ribosomal subunit. The N-terminus interacts with L11 and the large rRNA to form the base of the stalk. The C-terminus forms an elongated spine to which L12 dimers bind in a sequential fashion forming a multimeric L10(L12)X complex.

Its function is as follows. Forms part of the ribosomal stalk, playing a central role in the interaction of the ribosome with GTP-bound translation factors. The polypeptide is Large ribosomal subunit protein uL10 (Novosphingobium aromaticivorans (strain ATCC 700278 / DSM 12444 / CCUG 56034 / CIP 105152 / NBRC 16084 / F199)).